Consider the following 308-residue polypeptide: Oligopeptide transport ATP-binding protein AmiF (308 aa).

An ABC transporter domain is found at 6 to 251 (VEIKDLEISF…PIHPYTQALL (246 aa)). An ATP-binding site is contributed by 42 to 49 (GESGSGKT).

The protein belongs to the ABC transporter superfamily.

It is found in the cell membrane. Part of the binding-protein-dependent transport system for oligopeptides. Probably responsible for energy coupling to the transport system. This chain is Oligopeptide transport ATP-binding protein AmiF (amiF), found in Streptococcus pneumoniae serotype 4 (strain ATCC BAA-334 / TIGR4).